A 343-amino-acid polypeptide reads, in one-letter code: Probable dual-specificity RNA methyltransferase RlmN (343 aa).

E91 serves as the catalytic Proton acceptor. The Radical SAM core domain maps to H97 to D326. C104 and C331 are disulfide-bonded. [4Fe-4S] cluster-binding residues include C111, C115, and C118. S-adenosyl-L-methionine-binding positions include G158–E159, S190, S213–H215, and N289. C331 functions as the S-methylcysteine intermediate in the catalytic mechanism.

The protein belongs to the radical SAM superfamily. RlmN family. The cofactor is [4Fe-4S] cluster.

It is found in the cytoplasm. The enzyme catalyses adenosine(2503) in 23S rRNA + 2 reduced [2Fe-2S]-[ferredoxin] + 2 S-adenosyl-L-methionine = 2-methyladenosine(2503) in 23S rRNA + 5'-deoxyadenosine + L-methionine + 2 oxidized [2Fe-2S]-[ferredoxin] + S-adenosyl-L-homocysteine. It carries out the reaction adenosine(37) in tRNA + 2 reduced [2Fe-2S]-[ferredoxin] + 2 S-adenosyl-L-methionine = 2-methyladenosine(37) in tRNA + 5'-deoxyadenosine + L-methionine + 2 oxidized [2Fe-2S]-[ferredoxin] + S-adenosyl-L-homocysteine. In terms of biological role, specifically methylates position 2 of adenine 2503 in 23S rRNA and position 2 of adenine 37 in tRNAs. The sequence is that of Probable dual-specificity RNA methyltransferase RlmN from Thermotoga sp. (strain RQ2).